We begin with the raw amino-acid sequence, 211 residues long: Protein N-terminal glutamine amidohydrolase (211 aa).

Residues cysteine 24, histidine 78, and aspartate 94 contribute to the active site.

Belongs to the NTAQ1 family. Monomer.

The enzyme catalyses N-terminal L-glutaminyl-[protein] + H2O = N-terminal L-glutamyl-[protein] + NH4(+). In terms of biological role, mediates the side-chain deamidation of N-terminal glutamine residues to glutamate, an important step in N-end rule pathway of protein degradation. Conversion of the resulting N-terminal glutamine to glutamate renders the protein susceptible to arginylation, polyubiquitination and degradation as specified by the N-end rule. Does not act on substrates with internal or C-terminal glutamine and does not act on non-glutamine residues in any position. This chain is Protein N-terminal glutamine amidohydrolase (tun), found in Anopheles gambiae (African malaria mosquito).